The following is a 521-amino-acid chain: Bifunctional purine biosynthesis protein PurH (521 aa).

Residues 1-145 (MIKQALISVS…KNHRDVTVVV (145 aa)) form the MGS-like domain.

This sequence belongs to the PurH family.

The enzyme catalyses (6R)-10-formyltetrahydrofolate + 5-amino-1-(5-phospho-beta-D-ribosyl)imidazole-4-carboxamide = 5-formamido-1-(5-phospho-D-ribosyl)imidazole-4-carboxamide + (6S)-5,6,7,8-tetrahydrofolate. The catalysed reaction is IMP + H2O = 5-formamido-1-(5-phospho-D-ribosyl)imidazole-4-carboxamide. It participates in purine metabolism; IMP biosynthesis via de novo pathway; 5-formamido-1-(5-phospho-D-ribosyl)imidazole-4-carboxamide from 5-amino-1-(5-phospho-D-ribosyl)imidazole-4-carboxamide (10-formyl THF route): step 1/1. It functions in the pathway purine metabolism; IMP biosynthesis via de novo pathway; IMP from 5-formamido-1-(5-phospho-D-ribosyl)imidazole-4-carboxamide: step 1/1. This is Bifunctional purine biosynthesis protein PurH from Burkholderia vietnamiensis (strain G4 / LMG 22486) (Burkholderia cepacia (strain R1808)).